A 400-amino-acid polypeptide reads, in one-letter code: Argininosuccinate synthase (400 aa).

Position 9 to 17 (9 to 17) interacts with ATP; the sequence is AYSGGLDTS. Y87 contributes to the L-citrulline binding site. An ATP-binding site is contributed by G117. T119, N123, and D124 together coordinate L-aspartate. N123 is an L-citrulline binding site. Positions 127, 176, 185, 261, and 273 each coordinate L-citrulline.

Belongs to the argininosuccinate synthase family. Type 1 subfamily. Homotetramer.

The protein resides in the cytoplasm. It carries out the reaction L-citrulline + L-aspartate + ATP = 2-(N(omega)-L-arginino)succinate + AMP + diphosphate + H(+). The protein operates within amino-acid biosynthesis; L-arginine biosynthesis; L-arginine from L-ornithine and carbamoyl phosphate: step 2/3. This is Argininosuccinate synthase from Chlorobium luteolum (strain DSM 273 / BCRC 81028 / 2530) (Pelodictyon luteolum).